Reading from the N-terminus, the 336-residue chain is Glyceraldehyde-3-phosphate dehydrogenase (336 aa).

NAD(+)-binding positions include 12 to 13 (RI), Asp-34, and Ser-120. D-glyceraldehyde 3-phosphate contacts are provided by residues 150-152 (SCT), Thr-181, Arg-198, 211-212 (TG), and Arg-234. Cys-151 (nucleophile) is an active-site residue. Asn-316 serves as a coordination point for NAD(+).

Belongs to the glyceraldehyde-3-phosphate dehydrogenase family. Homotetramer.

It localises to the cytoplasm. It carries out the reaction D-glyceraldehyde 3-phosphate + phosphate + NAD(+) = (2R)-3-phospho-glyceroyl phosphate + NADH + H(+). It participates in carbohydrate degradation; glycolysis; pyruvate from D-glyceraldehyde 3-phosphate: step 1/5. In terms of biological role, catalyzes the oxidative phosphorylation of glyceraldehyde 3-phosphate (G3P) to 1,3-bisphosphoglycerate (BPG) using the cofactor NAD. The first reaction step involves the formation of a hemiacetal intermediate between G3P and a cysteine residue, and this hemiacetal intermediate is then oxidized to a thioester, with concomitant reduction of NAD to NADH. The reduced NADH is then exchanged with the second NAD, and the thioester is attacked by a nucleophilic inorganic phosphate to produce BPG. The chain is Glyceraldehyde-3-phosphate dehydrogenase (gapA) from Staphylococcus aureus.